The sequence spans 178 residues: Large ribosomal subunit protein uL13m (178 aa).

N-acetylserine is present on serine 2.

Belongs to the universal ribosomal protein uL13 family. In terms of assembly, component of the mitochondrial large ribosomal subunit (mt-LSU). Mature mammalian 55S mitochondrial ribosomes consist of a small (28S) and a large (39S) subunit. The 28S small subunit contains a 12S ribosomal RNA (12S mt-rRNA) and 30 different proteins. The 39S large subunit contains a 16S rRNA (16S mt-rRNA), a copy of mitochondrial valine transfer RNA (mt-tRNA(Val)), which plays an integral structural role, and 52 different proteins. Interacts with OXA1L.

It is found in the mitochondrion. The chain is Large ribosomal subunit protein uL13m (MRPL13) from Homo sapiens (Human).